Consider the following 217-residue polypeptide: Uracil-DNA glycosylase (217 aa).

Aspartate 62 acts as the Proton acceptor in catalysis.

It belongs to the uracil-DNA glycosylase (UDG) superfamily. UNG family.

It localises to the cytoplasm. It carries out the reaction Hydrolyzes single-stranded DNA or mismatched double-stranded DNA and polynucleotides, releasing free uracil.. Its function is as follows. Excises uracil residues from the DNA which can arise as a result of misincorporation of dUMP residues by DNA polymerase or due to deamination of cytosine. This is Uracil-DNA glycosylase from Streptococcus pneumoniae (strain P1031).